A 243-amino-acid polypeptide reads, in one-letter code: Killer cell lectin-like receptor subfamily I member 1 (243 aa).

Residues 1–80 (MPHSKHRDYT…RQGPKSAVWR (80 aa)) lie on the Cytoplasmic side of the membrane. 2 short sequence motifs (ITIM motif) span residues 16–21 (IPYTEL) and 47–52 (LKYAEL). The helical; Signal-anchor for type II membrane protein transmembrane segment at 81–101 (VVTCVLGVLCVVLMITMGILV) threads the bilayer. Residues 102-243 (PKLFSGQEEQ…KPYACEFNKM (142 aa)) lie on the Extracellular side of the membrane. 5 N-linked (GlcNAc...) asparagine glycosylation sites follow: Asn123, Asn191, Asn194, Asn200, and Asn214. The C-type lectin domain occupies 137-239 (FGNNFYLFFR…CSSKKPYACE (103 aa)). 2 cysteine pairs are disulfide-bonded: Cys158–Cys238 and Cys217–Cys230.

Heterodimer with KLRE1. Interacts with PTPN6. In terms of tissue distribution, expressed in natural killer (NK) cells.

It localises to the cell membrane. In terms of biological role, lectin-like receptor for natural killer (NK) cells. Heterodimer formation with KLRE1 mediates inhibition of NK cell cytolytic activity. The chain is Killer cell lectin-like receptor subfamily I member 1 from Rattus norvegicus (Rat).